Here is a 452-residue protein sequence, read N- to C-terminus: MMEKVTKLALTSRVMVLVVQLLANFATPDHKPDVFRMPQSEGPKKNGPFPWLDELVLQSLSGLRHWDGEYFLHIASNLYTYENTLAFYPLYPVVVRHVAQACQHLGIPLSRDALILLVAVALNVLIFCKTANVLYKLTQRMFNDHNKSWNAALIFCFNPASIFFSAAYSETFFAFASFSLMLECMRSEKDFRTFRLGAALTGCFVCRSNGLLTLGFPLYFLARHILLSTGSVQRCWQLFKMGLAMLVALGILHTYYFYIYRLYCLPDVKVQHAQHVVDYAKERSFLISGQASVGSPWCGYTLPFPYTYVQSHYWDVGFLRYYKWKQLPNFLLALPMLLFMHWHCYDYIRKLVANTWSKISPSEYQGILKEHISFPFVLHAAVLTLVCTLYVHIQVSTRLLASATPVFYWFAADYMPNTFQLSFRSKAGVLFIWCLTYSLVGTVLFSNNYPWT.

The Cytoplasmic segment spans residues 1 to 7 (MMEKVTK). A helical transmembrane segment spans residues 8 to 28 (LALTSRVMVLVVQLLANFATP). Topologically, residues 29-113 (DHKPDVFRMP…HLGIPLSRDA (85 aa)) are lumenal. The chain crosses the membrane as a helical span at residues 114–134 (LILLVAVALNVLIFCKTANVL). At 135–161 (YKLTQRMFNDHNKSWNAALIFCFNPAS) the chain is on the cytoplasmic side. A helical membrane pass occupies residues 162-182 (IFFSAAYSETFFAFASFSLML). Residues 183-209 (ECMRSEKDFRTFRLGAALTGCFVCRSN) lie on the Lumenal side of the membrane. A helical membrane pass occupies residues 210–230 (GLLTLGFPLYFLARHILLSTG). The Cytoplasmic segment spans residues 231 to 238 (SVQRCWQL). The chain crosses the membrane as a helical span at residues 239 to 259 (FKMGLAMLVALGILHTYYFYI). The Lumenal segment spans residues 260–284 (YRLYCLPDVKVQHAQHVVDYAKERS). Residues 285 to 305 (FLISGQASVGSPWCGYTLPFP) form a helical membrane-spanning segment. The Cytoplasmic segment spans residues 306–327 (YTYVQSHYWDVGFLRYYKWKQL). A helical transmembrane segment spans residues 328–348 (PNFLLALPMLLFMHWHCYDYI). The Lumenal segment spans residues 349 to 370 (RKLVANTWSKISPSEYQGILKE). Residues 371–391 (HISFPFVLHAAVLTLVCTLYV) traverse the membrane as a helical segment. At 392 to 398 (HIQVSTR) the chain is on the cytoplasmic side. Residues 399-419 (LLASATPVFYWFAADYMPNTF) form a helical membrane-spanning segment. At 420–426 (QLSFRSK) the chain is on the lumenal side. A helical transmembrane segment spans residues 427 to 447 (AGVLFIWCLTYSLVGTVLFSN). Over 448-452 (NYPWT) the chain is Cytoplasmic.

The protein belongs to the PIGV family.

The protein localises to the endoplasmic reticulum membrane. Its pathway is glycolipid biosynthesis; glycosylphosphatidylinositol-anchor biosynthesis. Its function is as follows. Mannosyltransferase involved in glycosylphosphatidylinositol-anchor biosynthesis. Transfers the second mannose to the glycosylphosphatidylinositol during GPI precursor assembly. Required for the GPI-mediated endoplasmic reticulum exit and proper targeting to the cell surface of chp. Required for GPI-mediated membrane attachment of chp, qsm and Cont. Essential for microvillar stability in the rhabdomere. This chain is GPI mannosyltransferase 2, found in Drosophila pseudoobscura pseudoobscura (Fruit fly).